Reading from the N-terminus, the 382-residue chain is Protein phosphatase 1A (382 aa).

G2 carries the N-myristoyl glycine lipid modification. Residues 23 to 291 (RYGLSSMQGW…DNMSVILICF (269 aa)) enclose the PPM-type phosphatase domain. Residues D60, G61, D239, and D282 each contribute to the Mn(2+) site. S375 and S377 each carry phosphoserine.

This sequence belongs to the PP2C family. In terms of assembly, monomer. Interacts with SMAD2; the interaction dephosphorylates SMAD2 in its C-terminal SXS motif resulting in disruption of the SMAD2/SMAD4 complex, SMAD2 nuclear export and termination of the TGF-beta-mediated signaling. Interacts with SMAD2; the interaction dephosphorylates SMAD2 in its C-terminal SXS motif resulting in disruption of the SMAD2/SMAD4 complex, SMAD2 nuclear export and termination of the TGF-beta-mediated signaling. Interacts with the phosphorylated form of IKBKB/IKKB. Requires Mg(2+) as cofactor. Mn(2+) serves as cofactor. In terms of processing, N-myristoylation is essential for the recognition of its substrates for dephosphorylation.

It is found in the nucleus. Its subcellular location is the cytoplasm. It localises to the cytosol. The protein localises to the membrane. It carries out the reaction O-phospho-L-seryl-[protein] + H2O = L-seryl-[protein] + phosphate. The enzyme catalyses O-phospho-L-threonyl-[protein] + H2O = L-threonyl-[protein] + phosphate. Enzyme with a broad specificity. Negatively regulates TGF-beta signaling through dephosphorylating SMAD2 and SMAD3, resulting in their dissociation from SMAD4, nuclear export of the SMADs and termination of the TGF-beta-mediated signaling. Dephosphorylates PRKAA1 and PRKAA2. Plays an important role in the termination of TNF-alpha-mediated NF-kappa-B activation through dephosphorylating and inactivating IKBKB/IKKB. The sequence is that of Protein phosphatase 1A (PPM1A) from Bos taurus (Bovine).